Reading from the N-terminus, the 353-residue chain is Photosystem II D2 protein (353 aa).

An N-acetylthreonine modification is found at threonine 2. At threonine 2 the chain carries Phosphothreonine. The chain crosses the membrane as a helical span at residues 41–61 (CAYFAVGGWFTGTTFVTSWYT). Histidine 118 contacts chlorophyll a. The helical transmembrane segment at 125 to 141 (GFMLRQFELARSVQLRP) threads the bilayer. Positions 130 and 143 each coordinate pheophytin a. The helical transmembrane segment at 153 to 166 (VFVSVFLIYPLGQS) threads the bilayer. A chlorophyll a-binding site is contributed by histidine 198. The chain crosses the membrane as a helical span at residues 208-228 (AALLCAIHGATVENTLFEDGD). Histidine 215 and phenylalanine 262 together coordinate a plastoquinone. Position 215 (histidine 215) interacts with Fe cation. Residue histidine 269 coordinates Fe cation. Residues 279-295 (GLWMSALGVVGLALNLR) form a helical membrane-spanning segment.

This sequence belongs to the reaction center PufL/M/PsbA/D family. PSII is composed of 1 copy each of membrane proteins PsbA, PsbB, PsbC, PsbD, PsbE, PsbF, PsbH, PsbI, PsbJ, PsbK, PsbL, PsbM, PsbT, PsbX, PsbY, PsbZ, Psb30/Ycf12, at least 3 peripheral proteins of the oxygen-evolving complex and a large number of cofactors. It forms dimeric complexes. The D1/D2 heterodimer binds P680, chlorophylls that are the primary electron donor of PSII, and subsequent electron acceptors. It shares a non-heme iron and each subunit binds pheophytin, quinone, additional chlorophylls, carotenoids and lipids. There is also a Cl(-1) ion associated with D1 and D2, which is required for oxygen evolution. The PSII complex binds additional chlorophylls, carotenoids and specific lipids. is required as a cofactor.

The protein resides in the plastid. The protein localises to the chloroplast thylakoid membrane. The enzyme catalyses 2 a plastoquinone + 4 hnu + 2 H2O = 2 a plastoquinol + O2. Functionally, photosystem II (PSII) is a light-driven water:plastoquinone oxidoreductase that uses light energy to abstract electrons from H(2)O, generating O(2) and a proton gradient subsequently used for ATP formation. It consists of a core antenna complex that captures photons, and an electron transfer chain that converts photonic excitation into a charge separation. The D1/D2 (PsbA/PsbD) reaction center heterodimer binds P680, the primary electron donor of PSII as well as several subsequent electron acceptors. D2 is needed for assembly of a stable PSII complex. The polypeptide is Photosystem II D2 protein (Lactuca sativa (Garden lettuce)).